The following is a 191-amino-acid chain: Calcium-activated potassium channel subunit beta-1 (191 aa).

Topologically, residues 2-18 (GKKLVMAQRRGETRALC) are cytoplasmic. The chain crosses the membrane as a helical span at residues 19-39 (LGVAMVVGAVITYYILGTTVL). The Extracellular segment spans residues 40–157 (PLYQKSVWTQ…YRRLYGPQSL (118 aa)). 2 N-linked (GlcNAc...) asparagine glycosylation sites follow: Asn-80 and Asn-142. A helical membrane pass occupies residues 158 to 178 (LFSLFWPTFLLTGGLLIIVMV). Residues 179-191 (KINQSLSILAAQR) are Cytoplasmic-facing.

This sequence belongs to the KCNMB (TC 8.A.14.1) family. KCNMB1 subfamily. In terms of assembly, interacts with KCNMA1 tetramer. There are probably 4 molecules of KCMNB1 per KCNMA1 tetramer. N-glycosylated.

The protein resides in the membrane. Its function is as follows. Regulatory subunit of the calcium activated potassium KCNMA1 (maxiK) channel. Modulates the calcium sensitivity and gating kinetics of KCNMA1, thereby contributing to KCNMA1 channel diversity. Increases the apparent Ca(2+)/voltage sensitivity of the KCNMA1 channel. It also modifies KCNMA1 channel kinetics and alters its pharmacological properties. It slows down the activation and the deactivation kinetics of the channel. Acts as a negative regulator of smooth muscle contraction by enhancing the calcium sensitivity to KCNMA1. Its presence is also a requirement for internal binding of the KCNMA1 channel opener dehydrosoyasaponin I (DHS-1) triterpene glycoside and for external binding of the agonist hormone 17-beta-estradiol (E2). Increases the binding activity of charybdotoxin (CTX) toxin to KCNMA1 peptide blocker by increasing the CTX association rate and decreasing the dissociation rate. The protein is Calcium-activated potassium channel subunit beta-1 (KCNMB1) of Bos taurus (Bovine).